Here is a 191-residue protein sequence, read N- to C-terminus: UPF0312 protein Sbal195_3198 (191 aa).

Residues 1–22 form the signal peptide; it reads MKKQLFSALIGASLLAPMAASA.

The protein belongs to the UPF0312 family. Type 1 subfamily.

The protein localises to the periplasm. This is UPF0312 protein Sbal195_3198 from Shewanella baltica (strain OS195).